The sequence spans 382 residues: Acetylxylan esterase A (382 aa).

A signal peptide spans 1-21 (MKSLSFSFLVTLFLYLTLSSA). The propeptide occupies 22-31 (RTLGKDVNKR). The segment at 35–307 (GSLQQVTGFG…GAKDMEWFGF (273 aa)) is catalytic. A glycan (N-linked (GlcNAc...) asparagine) is linked at Asn46. The active-site Charge relay system is Ser152. Asn194 carries an N-linked (GlcNAc...) asparagine glycan. A ser/Thr-rich linker region spans residues 308-345 (SGSGSSSTTTASATKTSTTSTTSTKTTSSTSSTTTSST). The span at 313–345 (SSTTTASATKTSTTSTTSTKTTSSTSSTTTSST) shows a compositional bias: low complexity. Residues 313-346 (SSTTTASATKTSTTSTTSTKTTSSTSSTTTSSTG) are disordered. Positions 346 to 382 (GVAAHWGQCGGSGWTGPTVCESGYTCTYSNAWYSQCL) constitute a CBM1 domain.

It belongs to the carbohydrate esterase 1 (CE1) family. AxeA subfamily. Monomer. Post-translationally, glycosylated.

It is found in the secreted. It catalyses the reaction Deacetylation of xylans and xylo-oligosaccharides.. It functions in the pathway glycan degradation; xylan degradation. Inactivated by phenylmethylsulfonylfluorid (PMSF), a specific inhibitor of serine esterases. Its function is as follows. Acetylxylan esterase involved in the hydrolysis of xylan, a major structural heterogeneous polysaccharide found in plant biomass representing the second most abundant polysaccharide in the biosphere, after cellulose. Degrades acetylated xylans by cleaving acetyl side groups from the hetero-xylan backbone. The chain is Acetylxylan esterase A (axeA) from Talaromyces purpureogenus (Soft rot fungus).